The primary structure comprises 439 residues: Glutamine synthetase (439 aa).

Positions 13–98 (ENVRFIRLQF…VICDVYTPDG (86 aa)) constitute a GS beta-grasp domain. Residues 105–439 (PRYRLRRMME…NWELQRYLYL (335 aa)) form the GS catalytic domain. Mg(2+)-binding residues include Glu-128 and Glu-130. Residue Glu-180 participates in ATP binding. Glu-185 and Glu-192 together coordinate Mg(2+). L-glutamate contacts are provided by residues 236–237 (NG) and Gly-237. Mg(2+) is bound at residue His-241. Residues 243–245 (HMS) and Ser-245 each bind ATP. L-glutamate is bound by residues Arg-294, Glu-300, and Arg-312. ATP contacts are provided by Arg-312, Arg-317, and Lys-324. Glu-329 contributes to the Mg(2+) binding site. Arg-331 lines the L-glutamate pocket.

This sequence belongs to the glutamine synthetase family. Oligomer of 12 subunits arranged in the form of two hexagons. In its feedback-inhibited form, interacts with TnrA in order to block its DNA-binding activity. The cofactor is Mg(2+).

Its subcellular location is the cytoplasm. The catalysed reaction is L-glutamate + NH4(+) + ATP = L-glutamine + ADP + phosphate + H(+). With respect to regulation, inhibited by glutamine. In terms of biological role, glutamine synthetase (GS) is an unusual multitasking protein that functions as an enzyme, a transcription coregulator, and a chaperone in ammonium assimilation and in the regulation of genes involved in nitrogen metabolism. It catalyzes the ATP-dependent biosynthesis of glutamine from glutamate and ammonia. Feedback-inhibited GlnA also interacts with and regulates the activity of the transcriptional regulator TnrA. During nitrogen limitation, TnrA is in its DNA-binding active state and turns on the transcription of genes required for nitrogen assimilation. Under conditions of nitrogen excess, feedback-inhibited GlnA forms a stable complex with TnrA, which inhibits its DNA-binding activity. In contrast, feedback-inhibited GlnA acts as a chaperone to stabilize the DNA-binding activity of GlnR, which represses the transcription of nitrogen assimilation genes. The protein is Glutamine synthetase of Thermotoga maritima (strain ATCC 43589 / DSM 3109 / JCM 10099 / NBRC 100826 / MSB8).